The chain runs to 469 residues: Programmed cell death protein 4 (469 aa).

Met-1 carries the N-acetylmethionine modification. Over residues 1–23 the composition is skewed to polar residues; that stretch reads MDIENEQTLNVNPTDPDNLSDSL. Disordered regions lie at residues 1–37 and 58–128; these read MDIE…EEIK and KAKR…GTPG. Ser-25 carries the phosphoserine modification. A Nuclear localization signal motif is present at residues 58–64; sequence KAKRRLR. At Ser-67 the chain carries Phosphoserine; by PKB and RPS6KB1. 5 positions are modified to phosphoserine: Ser-68, Ser-71, Ser-76, Ser-78, and Ser-94. A Phosphodegron motif is present at residues 70–76; it reads DSGRGDS. Positions 114–125 are enriched in gly residues; it reads KKGGAGGKGVWG. Tyr-152 is subject to Phosphotyrosine. The MI 1 domain maps to 163-284; it reads AFEKTLTPII…CNTYIDSYKG (122 aa). 2 positions are modified to phosphoserine: Ser-313 and Ser-317. The region spanning 326 to 449 is the MI 2 domain; that stretch reads HLVKEIDMLL…SKQLRDLCPS (124 aa). The Nuclear localization signal motif lies at 448–454; the sequence is PSRGRKR. The residue at position 457 (Ser-457) is a Phosphoserine; by PKB.

It belongs to the PDCD4 family. Interacts (via MI domains) with EIF4A1 and EIF4A2 (via N-terminal domain). Heterotrimer with EIF4A1; one molecule of PDCD4 binds two molecules of EIF4A1. Interacts with EIF4G1. May form a complex with EIF4A1 and EIF4G1. The interaction between PDCD4 and EIF4A1 interferes with the interaction between EIF4A1 and EIF4G. When phosphorylated, interacts with BTRC and FBXW11. Polyubiquitinated, leading to its proteasomal degradation. Rapidly degraded in response to mitogens. Phosphorylation of the phosphodegron promotes interaction with BTRC and proteasomal degradation. Post-translationally, phosphorylated at Ser-67 by RPS6KB1 in response to mitogens; phosphorylation promotes proteasomal degradation of PDCD4. In terms of tissue distribution, expressed ubiquitously. Highyly expressed in thymus and liver. Moderately expressed in brain, kidney and spleen; weakly in lung and heart. Expression is up- or down-regulated in response to apoptosis inducers. Regulated by many programmed cell death-inducing stimuli.

Its subcellular location is the nucleus. The protein resides in the cytoplasm. Functionally, inhibits translation initiation and cap-dependent translation. May excert its function by hindering the interaction between EIF4A1 and EIF4G. Inhibits the helicase activity of EIF4A. Modulates the activation of JUN kinase. Down-regulates the expression of MAP4K1, thus inhibiting events important in driving invasion, namely, MAPK85 activation and consequent JUN-dependent transcription. May play a role in apoptosis. Tumor suppressor. Inhibits tumor promoter-induced neoplastic transformation. Binds RNA. The sequence is that of Programmed cell death protein 4 (Pdcd4) from Mus musculus (Mouse).